The primary structure comprises 388 residues: Na(+)/H(+) antiporter NhaA (388 aa).

11 consecutive transmembrane segments (helical) span residues 14–34 (GGII…MGAT), 59–79 (MLLW…GLEV), 95–115 (AFPV…YLAF), 125–145 (GWAI…ALLG), 154–174 (IFLM…IALF), 179–199 (LSIV…LLNL), 219–239 (VLKS…FIPL), 254–274 (VLHP…NAGV), 292–312 (IIAG…WLAL), 328–348 (IMAV…IASL), and 360–380 (WAKL…YSWL).

The protein belongs to the NhaA Na(+)/H(+) (TC 2.A.33) antiporter family.

The protein resides in the cell inner membrane. The enzyme catalyses Na(+)(in) + 2 H(+)(out) = Na(+)(out) + 2 H(+)(in). Its function is as follows. Na(+)/H(+) antiporter that extrudes sodium in exchange for external protons. In Salmonella paratyphi A (strain ATCC 9150 / SARB42), this protein is Na(+)/H(+) antiporter NhaA.